Here is a 62-residue protein sequence, read N- to C-terminus: Large ribosomal subunit protein uL30 (62 aa).

The protein belongs to the universal ribosomal protein uL30 family. As to quaternary structure, part of the 50S ribosomal subunit.

This is Large ribosomal subunit protein uL30 from Nitrosospira multiformis (strain ATCC 25196 / NCIMB 11849 / C 71).